The chain runs to 349 residues: Draxin (349 aa).

The N-terminal stretch at 1–25 is a signal peptide; sequence MAASSTFFSPSLFLCVLVLIDITLA. Positions 40 to 53 are enriched in polar residues; that stretch reads NHLQNQETWPQQPR. Disordered stretches follow at residues 40–63, 119–166, and 246–273; these read NHLQ…HGLA, PHAE…LYKK, and WPSA…EGEP. Positions 54 to 63 are enriched in basic residues; sequence SGHHHKHGLA. Basic and acidic residues predominate over residues 119–139; sequence PHAERENQSPGSERGKKQNRE. Composition is skewed to basic residues over residues 140–155 and 249–258; these read QRRH…HRGK and AKKKEKRRSK. N-linked (GlcNAc...) asparagine glycosylation is present at asparagine 264.

The protein belongs to the draxin family.

Its subcellular location is the secreted. Its function is as follows. Chemorepulsive axon guidance protein required for the development of spinal cord and forebrain commissures. Acts as a chemorepulsive guidance protein for commissural axons during development. Able to inhibit or repel neurite outgrowth from dorsal spinal cord and cortical explants in vitro. Binds directly to the neurites and growth cones. This chain is Draxin, found in Gallus gallus (Chicken).